A 37-amino-acid polypeptide reads, in one-letter code: Large ribosomal subunit protein bL36 (37 aa).

It belongs to the bacterial ribosomal protein bL36 family.

This chain is Large ribosomal subunit protein bL36, found in Cyanothece sp. (strain PCC 7425 / ATCC 29141).